Consider the following 727-residue polypeptide: Glycerol-3-phosphate dehydrogenase, mitochondrial (727 aa).

A mitochondrion-targeting transit peptide spans 1–42; that stretch reads MAFQKAVKGTILVGGGALATVLGLSQFAHYRRKQMNLAYVKA. 71-99 contacts FAD; the sequence is DILVIGGGATGSGCALDAVTRGLKTALVE. Tyr601 is modified (phosphotyrosine). EF-hand domains are found at residues 623-658 and 659-694; these read SDIDRYKKRFHKFDADKKGFITIVDVQRVLESINVQ and MDENTLHEILNEVDLNKNGQVELNEFLQLMSAIQKG. Ca(2+) is bound by residues Asp672, Asn674, Asn676, Gln678, and Glu683.

Belongs to the FAD-dependent glycerol-3-phosphate dehydrogenase family. Requires FAD as cofactor.

The protein resides in the mitochondrion. The enzyme catalyses a quinone + sn-glycerol 3-phosphate = dihydroxyacetone phosphate + a quinol. It functions in the pathway polyol metabolism; glycerol degradation via glycerol kinase pathway; glycerone phosphate from sn-glycerol 3-phosphate (aerobic route): step 1/1. Calcium-binding enhance the activity of the enzyme. Its function is as follows. Calcium-responsive mitochondrial glycerol-3-phosphate dehydrogenase which seems to be a key component of the pancreatic beta-cell glucose-sensing device. The protein is Glycerol-3-phosphate dehydrogenase, mitochondrial (GPD2) of Macaca fascicularis (Crab-eating macaque).